Consider the following 802-residue polypeptide: Osmosensitive cation channel TMEM63C (802 aa).

Over 1 to 35 (MSAFPDSMDQKFHNMTVNECFQSRSTVLQGQPFGG) the chain is Extracellular. Residues 36–60 (IPTVLVLNIILWVFVVLLYSFLRKA) traverse the membrane as a helical segment. Residues 61-124 (AWDYGRLALL…RDRDLINKCG (64 aa)) are Cytoplasmic-facing. A phosphoserine mark is found at S75 and S78. Residues 125–157 (DDARIYITFQYHLIIFVLILCIPSLGIILPVNY) traverse the membrane as a helical segment. The Extracellular portion of the chain corresponds to 158–180 (IGTVLDWNSHFGRTTIVNVSTES). A helical transmembrane segment spans residues 181–205 (KFLWLHSLFAFLYFLINLAFMGHHC). Residues 206–401 (LGFVPKKSLH…IIWKHLSIRR (196 aa)) are Cytoplasmic-facing. The chain crosses the membrane as a helical span at residues 402–431 (FSWWTRFIAINTFLFFLFFFLTTPAIIINT). At 432-446 (IDIYNVTRPIEKLQS) the chain is on the extracellular side. A helical transmembrane segment spans residues 447 to 476 (PIVTQFFPSVLLWAFTVTMPLLVYLSAFLE). Topologically, residues 477–480 (AHWT) are cytoplasmic. A helical membrane pass occupies residues 481-517 (RSSQNLIIVHKCYIFLVFMVVILPSMGLTSLHVFLRW). Topologically, residues 518–540 (LFDIYYLEHATIRFQCVFLPDNG) are extracellular. A helical membrane pass occupies residues 541–573 (AFFINYVITAALLGTGMELMRLGSLCTYCTRLF). The Cytoplasmic segment spans residues 574–593 (LSKSEPERVHIRKNQATDFQ). A helical transmembrane segment spans residues 594 to 612 (FGREYAWMLNVFSVVMAYS). The Extracellular segment spans residues 613–615 (ITC). A helical transmembrane segment spans residues 616–640 (PIIVPFGLLYLCMKHITDRYNMYYS). Topologically, residues 641–647 (YAPTKLN) are cytoplasmic. Residues 648–676 (AQIHMAAVYQAIFAPLLGLFWMLFFSILR) form a helical membrane-spanning segment. Over 677–681 (VGSLH) the chain is Extracellular. Residues 682-702 (SITLFSMSSLIISVVIAFSGV) traverse the membrane as a helical segment. Residues 703–802 (FLGKLRIAQR…EGLEMEGQSH (100 aa)) lie on the Cytoplasmic side of the membrane. A disordered region spans residues 753–785 (TPASSPARHTYGTINSQPEEGEEESGLRGFARE).

The protein belongs to the CSC1 (TC 1.A.17) family. As to quaternary structure, monomer.

It localises to the endoplasmic reticulum membrane. Its subcellular location is the cell membrane. It carries out the reaction Ca(2+)(in) = Ca(2+)(out). Acts as an osmosensitive cation channel preferentially activated upon hypotonic stress. In contrast to TMEM63B, does not show phospholipid scramblase activity. Enriched in mitochondria-ER contact sites where it may regulate the metabolite flux and organelles' morphologies in response to osmotic changes. In particular may regulate mitochondrial motility and function in motor neuron axons. Required for the functional integrity of the kidney glomerular filtration barrier. This chain is Osmosensitive cation channel TMEM63C, found in Mus musculus (Mouse).